Here is a 150-residue protein sequence, read N- to C-terminus: Transcriptional repressor NrdR (150 aa).

Residues 3 to 33 (CPFCGGESRVLESRPASDEEAVRRRRECLAC) fold into a zinc finger. The ATP-cone domain occupies 48-138 (LIVVKKDGRR…VYREFKDLNE (91 aa)).

This sequence belongs to the NrdR family. Zn(2+) serves as cofactor.

In terms of biological role, negatively regulates transcription of bacterial ribonucleotide reductase nrd genes and operons by binding to NrdR-boxes. The protein is Transcriptional repressor NrdR of Symbiobacterium thermophilum (strain DSM 24528 / JCM 14929 / IAM 14863 / T).